The primary structure comprises 79 residues: Small ribosomal subunit protein bS18 (79 aa).

The protein belongs to the bacterial ribosomal protein bS18 family. As to quaternary structure, part of the 30S ribosomal subunit. Forms a tight heterodimer with protein bS6.

Functionally, binds as a heterodimer with protein bS6 to the central domain of the 16S rRNA, where it helps stabilize the platform of the 30S subunit. This Latilactobacillus sakei subsp. sakei (strain 23K) (Lactobacillus sakei subsp. sakei) protein is Small ribosomal subunit protein bS18.